We begin with the raw amino-acid sequence, 1198 residues long: Fibronectin type-III domain-containing protein 3a (1198 aa).

The span at 189–201 shows a compositional bias: basic and acidic residues; the sequence is KLKDRHGTQKDKL. A disordered region spans residues 189–256; sequence KLKDRHGTQK…SQTDVEIEEK (68 aa). Over residues 229-247 the composition is skewed to low complexity; it reads GISTGSTKSKSVGKGKSNS. 9 Fibronectin type-III domains span residues 269-370, 374-466, 470-563, 567-661, 665-758, 762-852, 864-951, 952-1045, and 1046-1151; these read NIAK…TMSC, APNL…TSGT, TPAS…TCPD, APSK…TPAV, PCQP…TAPG, QCKP…TPAS, SEDE…TKPL, PPDP…TPKS, and VPAA…TEPP. The interval 553 to 574 is disordered; sequence SETVDYTTCPDKPGAPSKPSVK. The helical transmembrane segment at 1172-1192 threads the bilayer; that stretch reads VCAAVILALFAIFSILIAVII.

The protein belongs to the FNDC3 family.

It is found in the golgi apparatus membrane. The sequence is that of Fibronectin type-III domain-containing protein 3a (FNDC3A) from Gallus gallus (Chicken).